Here is a 467-residue protein sequence, read N- to C-terminus: 3-isopropylmalate dehydratase large subunit (467 aa).

Positions 347, 407, and 410 each coordinate [4Fe-4S] cluster.

This sequence belongs to the aconitase/IPM isomerase family. LeuC type 1 subfamily. Heterodimer of LeuC and LeuD. It depends on [4Fe-4S] cluster as a cofactor.

It carries out the reaction (2R,3S)-3-isopropylmalate = (2S)-2-isopropylmalate. The protein operates within amino-acid biosynthesis; L-leucine biosynthesis; L-leucine from 3-methyl-2-oxobutanoate: step 2/4. Catalyzes the isomerization between 2-isopropylmalate and 3-isopropylmalate, via the formation of 2-isopropylmaleate. This chain is 3-isopropylmalate dehydratase large subunit, found in Trichormus variabilis (strain ATCC 29413 / PCC 7937) (Anabaena variabilis).